The following is a 638-amino-acid chain: 3D-(3,5/4)-trihydroxycyclohexane-1,2-dione hydrolase (638 aa).

Position 67 (E67) interacts with thiamine diphosphate. The interval 442 to 523 (SLPGDLQRLW…INIMLFDNSG (82 aa)) is thiamine pyrophosphate binding. Residues D494 and N521 each coordinate Mg(2+).

It belongs to the TPP enzyme family. Requires Mg(2+) as cofactor. Thiamine diphosphate is required as a cofactor.

It catalyses the reaction 3D-3,5/4-trihydroxycyclohexane-1,2-dione + H2O = 5-deoxy-D-glucuronate + H(+). The protein operates within polyol metabolism; myo-inositol degradation into acetyl-CoA; acetyl-CoA from myo-inositol: step 3/7. Its function is as follows. Involved in the cleavage of the C1-C2 bond of 3D-(3,5/4)-trihydroxycyclohexane-1,2-dione (THcHDO) to yield 5-deoxy-glucuronate (5DG). This is 3D-(3,5/4)-trihydroxycyclohexane-1,2-dione hydrolase from Listeria monocytogenes serovar 1/2a (strain ATCC BAA-679 / EGD-e).